The primary structure comprises 462 residues: Probable acid phosphatase SPBC4.06 (462 aa).

The Nucleophile role is filled by His-35. Residue Asp-330 is the Proton donor of the active site.

The protein belongs to the histidine acid phosphatase family.

It localises to the mitochondrion. The catalysed reaction is a phosphate monoester + H2O = an alcohol + phosphate. The protein is Probable acid phosphatase SPBC4.06 of Schizosaccharomyces pombe (strain 972 / ATCC 24843) (Fission yeast).